Here is a 442-residue protein sequence, read N- to C-terminus: Tubulin beta chain (442 aa).

8 residues coordinate GTP: Gln-11, Glu-69, Ser-138, Gly-142, Thr-143, Gly-144, Asn-204, and Asn-226. Glu-69 provides a ligand contact to Mg(2+).

The protein belongs to the tubulin family. As to quaternary structure, dimer of alpha and beta chains. A typical microtubule is a hollow water-filled tube with an outer diameter of 25 nm and an inner diameter of 15 nM. Alpha-beta heterodimers associate head-to-tail to form protofilaments running lengthwise along the microtubule wall with the beta-tubulin subunit facing the microtubule plus end conferring a structural polarity. Microtubules usually have 13 protofilaments but different protofilament numbers can be found in some organisms and specialized cells. Requires Mg(2+) as cofactor.

It localises to the cytoplasm. It is found in the cytoskeleton. In terms of biological role, tubulin is the major constituent of microtubules, a cylinder consisting of laterally associated linear protofilaments composed of alpha- and beta-tubulin heterodimers. Microtubules grow by the addition of GTP-tubulin dimers to the microtubule end, where a stabilizing cap forms. Below the cap, tubulin dimers are in GDP-bound state, owing to GTPase activity of alpha-tubulin. This is Tubulin beta chain from Trypanosoma cruzi.